A 448-amino-acid chain; its full sequence is Beta-glucosidase A (448 aa).

Glu-166 serves as the catalytic Proton donor. The Nucleophile role is filled by Glu-352.

It belongs to the glycosyl hydrolase 1 family. As to quaternary structure, homooctamer.

The enzyme catalyses Hydrolysis of terminal, non-reducing beta-D-glucosyl residues with release of beta-D-glucose.. Its function is as follows. BglA is intracellular and cleaves cellobiose probably through inorganic phosphate mediated hydrolysis. In Paenibacillus polymyxa (Bacillus polymyxa), this protein is Beta-glucosidase A (bglA).